The sequence spans 244 residues: Carboxy-S-adenosyl-L-methionine synthase (244 aa).

Residues Tyr41, 66-68, Asn134, and Arg201 contribute to the S-adenosyl-L-methionine site; that span reads GCS.

The protein belongs to the class I-like SAM-binding methyltransferase superfamily. Cx-SAM synthase family. Homodimer.

The catalysed reaction is prephenate + S-adenosyl-L-methionine = carboxy-S-adenosyl-L-methionine + 3-phenylpyruvate + H2O. Functionally, catalyzes the conversion of S-adenosyl-L-methionine (SAM) to carboxy-S-adenosyl-L-methionine (Cx-SAM). The chain is Carboxy-S-adenosyl-L-methionine synthase from Cellvibrio japonicus (strain Ueda107) (Pseudomonas fluorescens subsp. cellulosa).